The following is a 34-amino-acid chain: Photosystem II reaction center protein Y (34 aa).

The Lumenal segment spans residues 1-4 (MDIR). A helical membrane pass occupies residues 5–23 (LLIVLLPVLAAASWALYNI). Residues 24–34 (GRVALQQFRSM) lie on the Stromal side of the membrane.

It belongs to the PsbY family. In terms of assembly, PSII is composed of 1 copy each of membrane proteins PsbA, PsbB, PsbC, PsbD, PsbE, PsbF, PsbH, PsbI, PsbJ, PsbK, PsbL, PsbM, PsbT, PsbX, PsbY, PsbZ, Psb30/Ycf12, at least 3 peripheral proteins of the oxygen-evolving complex and a large number of cofactors. It forms dimeric complexes.

Its subcellular location is the plastid. The protein localises to the chloroplast thylakoid membrane. Its function is as follows. Loosely associated component of the core of photosystem II (PSII), it is not always seen in crystals. PSII is a light-driven water plastoquinone oxidoreductase, using light energy to abstract electrons from H(2)O, generating a proton gradient subsequently used for ATP formation. This Gracilaria tenuistipitata var. liui (Red alga) protein is Photosystem II reaction center protein Y.